Here is a 238-residue protein sequence, read N- to C-terminus: Doublecortin domain-containing protein (238 aa).

Residues V82–S112 are partial p25alpha domain. The 82-residue stretch at K151–L232 folds into the Doublecortin domain.

Interacts with alpha-tubulin 1 and beta-tubulin; the interaction stabilizes microtubule assembly.

It is found in the cytoplasm. It localises to the cytoskeleton. Functionally, involved in the stabilization of microtubules. Probably by controlling microtubules stabilization, plays a role in invasion, microneme secretion and parasite growth in host erythrocytes. This Plasmodium falciparum (isolate 3D7) protein is Doublecortin domain-containing protein.